We begin with the raw amino-acid sequence, 466 residues long: MIPAASFAGKQVSLFGLGGSGIATARALIEGGAQVLAWDDNPDSVAKAAATGIATADLRGADWAKFSAFVLSPGVPLTHPKPHWTVELAKGAGVEVIGDIELFCRERILQAPTAPFIAITGTNGKSTTTALTAHILKSAGRDTQMGGNIGRAVMTLDPPKPDRHFVVECSSYQIDLAPSINPTAGILLNLTPDHLDRHGTMQHYASIKERLVAGSETAIIGIDDSWCAQIAERLERAGQQVIRISKRLPLTDGYFADGTNLMEAVHGRYSKVAFLEGIGSLRGQHNAQNALAAVAACLKVGLDLGEIQSGLESFPGLAHRMEQVGRKDHVLFVNDSKATNADAAAPALSSFPRIYWIAGGLPKEGGIEPLRGFFPRIAKAYLIGEAAPAFSATLGEAVPYEISGTLAAAVAHAAHDAAKDDSGEVVVLLSPACASFDQFKNFEVRGEAFRQAASAIDGVKPIGGAR.

An ATP-binding site is contributed by 121–127 (GTNGKST).

The protein belongs to the MurCDEF family.

The protein localises to the cytoplasm. It catalyses the reaction UDP-N-acetyl-alpha-D-muramoyl-L-alanine + D-glutamate + ATP = UDP-N-acetyl-alpha-D-muramoyl-L-alanyl-D-glutamate + ADP + phosphate + H(+). The protein operates within cell wall biogenesis; peptidoglycan biosynthesis. Its function is as follows. Cell wall formation. Catalyzes the addition of glutamate to the nucleotide precursor UDP-N-acetylmuramoyl-L-alanine (UMA). This is UDP-N-acetylmuramoylalanine--D-glutamate ligase from Mesorhizobium japonicum (strain LMG 29417 / CECT 9101 / MAFF 303099) (Mesorhizobium loti (strain MAFF 303099)).